Reading from the N-terminus, the 282-residue chain is ABC transporter I family member 21 (282 aa).

The ABC transporter domain occupies I13–V248. G46–T53 contributes to the ATP binding site.

This sequence belongs to the ABC transporter superfamily. ABCI family. In terms of tissue distribution, expressed in root elongating zone and root meristem, as well as in elongating etiolated hypocotyls.

It is found in the cytoplasm. This is ABC transporter I family member 21 (ABCI21) from Arabidopsis thaliana (Mouse-ear cress).